Consider the following 490-residue polypeptide: 23S rRNA (uracil(1939)-C(5))-methyltransferase RlmD (490 aa).

In terms of domain architecture, TRAM spans 14–75 (APAPAEYPID…SSFEKATLTA (62 aa)). [4Fe-4S] cluster-binding residues include C88, C98, C101, and C180. S-adenosyl-L-methionine is bound by residues Q289, F318, N323, E339, N374, and D395. C446 functions as the Nucleophile in the catalytic mechanism.

This sequence belongs to the class I-like SAM-binding methyltransferase superfamily. RNA M5U methyltransferase family. RlmD subfamily.

The catalysed reaction is uridine(1939) in 23S rRNA + S-adenosyl-L-methionine = 5-methyluridine(1939) in 23S rRNA + S-adenosyl-L-homocysteine + H(+). Its function is as follows. Catalyzes the formation of 5-methyl-uridine at position 1939 (m5U1939) in 23S rRNA. This Polaromonas naphthalenivorans (strain CJ2) protein is 23S rRNA (uracil(1939)-C(5))-methyltransferase RlmD.